Consider the following 1030-residue polypeptide: FACT complex subunit spt-16 (1030 aa).

The stretch at 424 to 445 (RLKSNVIKFKEEQENREAEKDN) forms a coiled coil. Composition is skewed to basic and acidic residues over residues 435 to 449 (EQEN…DQKK) and 464 to 477 (TRNK…RKER). 2 disordered regions span residues 435–477 (EQEN…RKER) and 491–514 (ARLS…SYKT). Positions 623–645 (RLIKEMQKRFKTEEAEEREKEGA) form a coiled coil. The segment at 927–1030 (VESDNEEAMD…KSGPSHKRRK (104 aa)) is disordered. Acidic residues-rich tracts occupy residues 929–951 (SDNE…EEDA) and 958–983 (ESDE…DSDE). Residues 987–1007 (KDWSDLEEEAANADKRREVEE) adopt a coiled-coil conformation. Positions 998–1014 (NADKRREVEEPSRDRDR) are enriched in basic and acidic residues. Over residues 1015–1030 (KRPHSSKSGPSHKRRK) the composition is skewed to basic residues.

This sequence belongs to the peptidase M24 family. SPT16 subfamily. In terms of assembly, component of the FACT complex, a stable heterodimer of spt-16 and hmg-3 or hmg-4. Expressed in the germline and somatic cells.

It localises to the nucleus. The protein resides in the chromosome. Component of the FACT complex, a general chromatin factor that acts to reorganize nucleosomes. The FACT complex is involved in multiple processes that require DNA as a template such as mRNA elongation, DNA replication and DNA repair. During transcription elongation the FACT complex acts as a histone chaperone that both destabilizes and restores nucleosomal structure. It facilitates the passage of RNA polymerase II and transcription by promoting the dissociation of one histone H2A-H2B dimer from the nucleosome, then subsequently promotes the reestablishment of the nucleosome following the passage of RNA polymerase II. In embryos, promotes cell cycle progression and chromosomal segregation. Plays a role in the development of the anterior pharynx during embryonic development. The chain is FACT complex subunit spt-16 from Caenorhabditis elegans.